A 177-amino-acid chain; its full sequence is Endoribonuclease YbeY (177 aa).

3 residues coordinate Zn(2+): H142, H146, and H152.

It belongs to the endoribonuclease YbeY family. The cofactor is Zn(2+).

The protein localises to the cytoplasm. In terms of biological role, single strand-specific metallo-endoribonuclease involved in late-stage 70S ribosome quality control and in maturation of the 3' terminus of the 16S rRNA. This is Endoribonuclease YbeY from Synechococcus sp. (strain CC9311).